We begin with the raw amino-acid sequence, 512 residues long: NADH-quinone oxidoreductase subunit N (512 aa).

14 consecutive transmembrane segments (helical) span residues 32–52 (VLPALVLATGGVFLICLSVLF), 57–77 (FIIVRYVSGLILLLAFAAVFY), 97–117 (VLSFWLNLIYISMAIGTAAIV), 126–146 (IEFPEFYPLLLFATCGMTLMT), 151–171 (FILVFVALELMSICLYILIGM), 186–206 (FLLGSFSSGFMLMGIAFLFGG), 231–251 (IGLVLFITGVAFKIALFPYHA), 264–284 (VTGYMSTAAKAASIGLLLILY), 296–316 (WAWLPGILALCSMIYGNLLAL), 324–344 (MLAYSSIAHAGYVVAGISAGI), 348–368 (VLFYLIVYSFMSLGAFAILAY), 392–412 (AIAINIFFMSLAGVPPFGGFW), 431–451 (ILLIGGVTNSALALYYYLRIG), and 473–493 (VGVTGVVLFCLLMVSVGWFLL).

The protein belongs to the complex I subunit 2 family. NDH-1 is composed of 14 different subunits. Subunits NuoA, H, J, K, L, M, N constitute the membrane sector of the complex.

The protein resides in the cell inner membrane. The catalysed reaction is a quinone + NADH + 5 H(+)(in) = a quinol + NAD(+) + 4 H(+)(out). In terms of biological role, NDH-1 shuttles electrons from NADH, via FMN and iron-sulfur (Fe-S) centers, to quinones in the respiratory chain. The immediate electron acceptor for the enzyme in this species is believed to be ubiquinone. Couples the redox reaction to proton translocation (for every two electrons transferred, four hydrogen ions are translocated across the cytoplasmic membrane), and thus conserves the redox energy in a proton gradient. This chain is NADH-quinone oxidoreductase subunit N, found in Leptospira interrogans serogroup Icterohaemorrhagiae serovar Lai (strain 56601).